We begin with the raw amino-acid sequence, 253 residues long: DNA repair protein RecO (253 aa).

It belongs to the RecO family.

Involved in DNA repair and RecF pathway recombination. This Streptococcus agalactiae serotype III (strain NEM316) protein is DNA repair protein RecO.